The chain runs to 8525 residues: Nebulin (8525 aa).

The disordered stretch occupies residues 34–70 (TTTTRTSDYEQSETSKPALAQPALAQPASAKPVERRK). The span at 48-64 (SKPALAQPALAQPASAK) shows a compositional bias: low complexity. 235 Nebulin repeats span residues 83 to 110 (TPYI…KTKG), 112 to 146 (PYAS…VAKT), 156 to 181 (DIEH…DTKD), 182 to 216 (KYLL…ADKS), 217 to 251 (LFYP…EQQA), 252 to 286 (QFTP…NKIK), 296 to 321 (EVAN…NMKD), 323 to 357 (IYFM…KNKG), 362 to 396 (NVLP…KTKA), 403 to 431 (ETPK…KDIL), 433 to 467 (HYVG…EDRG), 501 to 535 (KFTQ…SEKF), 536 to 570 (KCHI…KSKA), 572 to 606 (KFDI…KNKG), 610 to 644 (GVLS…KTKA), 680 to 714 (HYVG…EDKG), 748 to 782 (KFTA…GEKF), 783 to 817 (KCHI…KSKA), 819 to 853 (KFDI…KSKG), 857 to 891 (GALS…KSKT), 892 to 918 (IYTA…VDYK), 923 to 957 (SYSY…SWMK), 968 to 986 (EMEK…KYRQ), 992 to 1026 (KFTS…EIIH), 1027 to 1061 (KYNL…DLSK), 1063 to 1097 (GYDL…KAKG), 1101 to 1135 (GFQS…KTKS), 1136 to 1166 (KYNT…HSLH), 1167 to 1201 (HYTY…NWMK), 1212 to 1230 (DVEK…KYRQ), 1236 to 1270 (KFTS…DVKH), 1271 to 1305 (KYTM…DLIA), 1307 to 1341 (GNNV…KSKG), 1345 to 1379 (GFRS…NTKT), 1380 to 1407 (SYHT…NYKQ), 1411 to 1445 (HYTY…SFLK), 1456 to 1474 (EVEK…KYRQ), 1480 to 1514 (KFTS…KLKH), 1515 to 1549 (KYTI…KTIA), 1551 to 1585 (GYDL…KAKG), 1589 to 1623 (GFLS…ASKT), 1624 to 1654 (KYHT…QSYH), 1655 to 1689 (HYTL…NWMK), 1697 to 1725 (ESLE…KLKF), 1730 to 1758 (DTME…KDKT), 1759 to 1793 (TIHV…EEKK), 1795 to 1829 (GYDL…QAKG), 1833 to 1867 (GFRS…KSKT), 1868 to 1894 (SFHT…ANYR), 1899 to 1933 (TYNM…DFMK), 1949 to 1962 (KKAM…KYRQ), 1968 to 2002 (KYST…ADKT), 2003 to 2037 (KVHI…ESKK), 2039 to 2073 (GYDL…KGKG), 2077 to 2111 (GFRS…NTKT), 2112 to 2138 (SYHT…TNYK), 2143 to 2177 (KYIL…EWYK), 2188 to 2206 (EVEK…KYRQ), 2212 to 2246 (QFKK…KDKT), 2247 to 2281 (KIHV…EALK), 2283 to 2317 (GYDL…KQLG), 2321 to 2355 (GFRS…KWKT), 2356 to 2382 (KFSS…VDYK), 2387 to 2421 (QWTC…WLRG), 2436 to 2449 (KRAS…KYRQ), 2455 to 2489 (KFTS…KDKT), 2490 to 2524 (QIHI…ELKR), 2526 to 2560 (GYDL…KQLG), 2564 to 2598 (GARN…KWKT), 2599 to 2625 (KFSS…VDYK), 2630 to 2664 (QWTC…WLKG), 2679 to 2692 (KRAT…VYRQ), 2698 to 2732 (KFSS…KDKT), 2733 to 2767 (TVHI…EAKR), 2769 to 2803 (GYDM…KQLG), 2807 to 2841 (GARA…KWKT), 2842 to 2868 (KFSS…VDYK), 2873 to 2907 (QWTC…WMRG), 2917 to 2935 (DVEK…IYRQ), 2941 to 2975 (KFTS…KDKT), 2976 to 3010 (QIHI…EAKK), 3012 to 3046 (GYDL…KQLG), 3050 to 3084 (GARN…KWKT), 3085 to 3111 (KFSS…VDYK), 3116 to 3150 (EWTC…WLRG), 3158 to 3178 (SMDV…IYRQ), 3184 to 3218 (KFTS…KDKT), 3219 to 3253 (QIHI…EAKK), 3255 to 3289 (GYDL…KQLG), 3293 to 3327 (GARN…KWKT), 3328 to 3354 (KFSS…VDYK), 3359 to 3393 (EWTC…WLRG), 3401 to 3421 (SMDV…IYRQ), 3427 to 3461 (KFTS…KDKT), 3462 to 3496 (QVHI…EAKK), 3498 to 3532 (GYDL…KQLG), 3536 to 3570 (GARA…KYKT), 3571 to 3597 (RYSS…VDYK), 3602 to 3636 (EWIC…WMKG), 3643 to 3664 (DSLE…IYRQ), 3670 to 3704 (KFTS…NDKK), 3705 to 3739 (TIHV…ESKK), 3741 to 3775 (GYDL…KQLG), 3779 to 3813 (GARN…KWKT), 3814 to 3840 (KFSS…IDYK), 3845 to 3879 (EWTC…WLRG), 3889 to 3907 (EVEK…KYRQ), 3913 to 3947 (KFTC…ADKT), 3948 to 3982 (SIHV…ESKM), 3984 to 4018 (DYDL…KQKG), 4022 to 4056 (GAQS…KWKT), 4057 to 4083 (KFSS…IDYR), 4088 to 4122 (EWTC…WLRG), 4132 to 4149 (EMNR…RLYR), 4156 to 4190 (SFTS…KDKS), 4191 to 4225 (NITI…DAKQ), 4227 to 4261 (GYDI…KQLG), 4265 to 4299 (GFRT…KSKG), 4300 to 4326 (IHNT…IDYR), 4331 to 4365 (QWTC…WLKG), 4375 to 4392 (EVMR…RLYR), 4399 to 4433 (KFTS…KEKA), 4434 to 4468 (NVNV…DVKM), 4470 to 4504 (GYDL…KQKG), 4508 to 4542 (GCRS…DHKA), 4543 to 4569 (KISI…VDYR), 4574 to 4608 (HWSC…WLRG), 4618 to 4635 (EMNR…RLYR), 4642 to 4676 (SFTS…KDKS), 4677 to 4711 (NITI…DTKQ), 4713 to 4747 (GYDI…KQLG), 4751 to 4785 (GFRT…KSKG), 4786 to 4812 (IHNT…IDYR), 4817 to 4851 (QWTC…WLKG), 4861 to 4878 (EVMR…RLYR), 4885 to 4919 (KFTS…KEKA), 4920 to 4954 (NVNV…DVKM), 4956 to 4990 (GYDL…KQKG), 4994 to 5028 (GCRS…DHKA), 5029 to 5055 (KISI…VDYR), 5060 to 5094 (HWSC…WLRG), 5104 to 5121 (EMNR…RLYR), 5128 to 5162 (SFTS…KDKS), 5163 to 5197 (NITI…DTKQ), 5199 to 5233 (GYDI…KQLG), 5237 to 5271 (GFRT…KSKG), 5272 to 5298 (IHNT…IDYR), 5303 to 5337 (QWTC…WLKG), 5347 to 5364 (EVMR…RLYR), 5371 to 5405 (KFTS…KEKA), 5406 to 5440 (NVNV…DVKM), 5442 to 5476 (GYDL…KQKG), 5480 to 5514 (GCRS…DHKA), 5515 to 5541 (KISI…VDYR), 5546 to 5580 (RWSC…WLRG), 5588 to 5607 (SPEV…SVYR), 5614 to 5648 (KYTS…KDKT), 5649 to 5683 (SIHI…EMKA), 5690 to 5718 (DAIP…KQKG), 5722 to 5756 (GTLT…KWKA), 5757 to 5783 (KIQS…MDYR), 5788 to 5822 (QWTC…WLRG), 5829 to 5853 (DSVS…TKIE), 5856 to 5890 (NFTP…ATKS), 5893 to 5924 (TLTE…RQKA), 5926 to 5960 (GYIL…KQKG), 5964 to 5998 (GVPT…KTKA), 5999 to 6025 (KINI…IDYR), 6030 to 6064 (QWMC…WLRG), 6071 to 6099 (DSVD…ENYP), 6100 to 6134 (NFRS…KAKG), 6135 to 6169 (KYTF…GTKA), 6171 to 6205 (GYTL…KQKG), 6209 to 6243 (AGKV…DTKA), 6244 to 6274 (NVHI…HYFH), 6275 to 6309 (QWTS…WLKG), 6316 to 6344 (DTPQ…ENLQ), 6345 to 6379 (NYNL…QIKD), 6380 to 6414 (KYTT…RVKA), 6416 to 6450 (SYIL…KFKA), 6458 to 6488 (VDDD…KNKM), 6489 to 6515 (KIHI…IDYR), 6532 to 6554 (HVRK…WLKG), 6561 to 6589 (DTPE…KTRN), 6590 to 6624 (DYKL…HSVR), 6626 to 6660 (KVAP…TLPT), 6661 to 6695 (GYRL…HTKA), 6697 to 6731 (GYTL…KLKD), 6732 to 6766 (KIHT…KMQG), 6767 to 6801 (HMIS…VLKG), 6808 to 6836 (DTPD…KMRD), 6837 to 6871 (KYKV…KQKS), 6872 to 6906 (IFTS…KERP), 6907 to 6941 (HHHA…KMKD), 6942 to 6976 (KYTP…KTKG), 6977 to 7011 (KYHT…SQLG), 7012 to 7046 (IWRS…WLKG), 7053 to 7081 (DTPD…RTKS), 7082 to 7110 (DFKY…YKSS), 7125 to 7151 (PDML…KSKD), 7152 to 7186 (KFTS…KAKP), 7188 to 7222 (GYTT…RNKS), 7223 to 7257 (NCTI…ANKA), 7258 to 7292 (HWKW…FLKG), 7297 to 7327 (VTDD…KERG), 7328 to 7362 (TCHA…KHLA), 7365 to 7399 (SYTT…KEKG), 7402 to 7433 (NYSI…DAKE), 7436 to 7470 (HYTT…KEGS), 7479 to 7505 (PDIE…KEKG), 7514 to 7542 (DSQL…KLHK), 7543 to 7577 (PVTD…KSKG), 7578 to 7612 (HYHT…KERG), 7619 to 7647 (ETPT…ESIK), 7650 to 7684 (NLTG…ESIR), 7687 to 7721 (GLTE…LEVK), 7731 to 7759 (ETPD…MEKA), 7760 to 7794 (NFTS…KSMS), 7795 to 7829 (YYET…NSKG), 7830 to 7864 (KITV…PGTA), 7867 to 7888 (KTPE…KYKE), 7892 to 7921 (QGTP…KENL), 7930 to 7957 (TPEI…KGIP), 7961 to 7988 (TPEM…KGTP), 7992 to 8013 (TPEM…YKEN), 8016 to 8045 (KGIP…KENL), 8054 to 8075 (TPEM…YKEN), 8078 to 8112 (KGTP…KGTP), 8116 to 8143 (TPEM…KGTP), 8147 to 8168 (TPEM…YKEN), 8171 to 8205 (KATA…KATP), 8209 to 8232 (TPEM…ENMR), 8233 to 8267 (KATP…KQIQ), 8269 to 8303 (KAAY…KHKG), and 8304 to 8330 (CFTP…INYR). Residues 8313–8468 (ITERVKKNMQ…SIPSHPSTAG (156 aa)) form an interaction with SVIL region. Disordered stretches follow at residues 8385 to 8422 (QAQR…LSTY) and 8439 to 8463 (TTEL…IPSH). The span at 8405–8419 (GEEKSEHSEAPDHHL) shows a compositional bias: basic and acidic residues. Residues 8444 to 8459 (QQRSSSVATQQTTVSS) are compositionally biased toward low complexity. Positions 8466–8525 (TAGKIFRAMYDYMAADADEVSFKDGDAIINVQAIDEGWMYGTVQRTGRTGMLPANYVEAI) constitute an SH3 domain.

In terms of assembly, monomer and homooligomer. Interacts with TTN/titin. Interacts with SVIL. Interacts (via nebulin repeats 160-164) with DES. As to expression, expressed in skeletal muscle (at protein level). Located in the thin filament of striated muscle.

It localises to the cytoplasm. The protein resides in the myofibril. The protein localises to the sarcomere. It is found in the cytoskeleton. In terms of biological role, this giant muscle protein may be involved in maintaining the structural integrity of sarcomeres and the membrane system associated with the myofibrils. Binds and stabilize F-actin. The chain is Nebulin (NEB) from Homo sapiens (Human).